A 398-amino-acid chain; its full sequence is MSLNSLDLPGKPEDTRVVVAMSGGVDSSVVAGILKREGYDVVGVTLQLYDHGAAVHRAGSCCAGQDIEDARRVSESLGIPHYVLDYEARFREAVIDPFANSYVSGETPIPCVSCNQTVKFADLLQTARDLGADALATGHYIRSRANGAHRALYRPVDTDRDQSYFLFATTQEQIDYLRFPLGHLPKAQVREIAEELGLTVAKKQDSQDICFVPQGKYSDIISRLKPEAANPGDIVHIDGRTLGRHDGIVHYTVGQRRGIGVATGEALYVVHLDAANARVIVGPREALETHKVFLRDVNWLGDTPIADLPKSGMEVFAKVRSTRPPRPAVLRHADGQTWVELVDGESGIAPGQACVLYSDDSNAACVFGGGFIGRSEREPQAEEMLRRLMANADKASAA.

ATP is bound by residues 20–27 (AMSGGVDS) and leucine 46. Cysteine 114 (nucleophile) is an active-site residue. Cysteines 114 and 210 form a disulfide. Glycine 138 is an ATP binding site. An interaction with tRNA region spans residues 160–162 (RDQ). Cysteine 210 serves as the catalytic Cysteine persulfide intermediate.

It belongs to the MnmA/TRMU family.

It is found in the cytoplasm. It catalyses the reaction S-sulfanyl-L-cysteinyl-[protein] + uridine(34) in tRNA + AH2 + ATP = 2-thiouridine(34) in tRNA + L-cysteinyl-[protein] + A + AMP + diphosphate + H(+). Functionally, catalyzes the 2-thiolation of uridine at the wobble position (U34) of tRNA, leading to the formation of s(2)U34. The chain is tRNA-specific 2-thiouridylase MnmA from Brucella melitensis biotype 1 (strain ATCC 23456 / CCUG 17765 / NCTC 10094 / 16M).